Consider the following 717-residue polypeptide: Asp/Glu-specific dipeptidyl-peptidase (717 aa).

An N-terminal signal peptide occupies residues 1–21 (MNKRFFPTLLLAFVCSTLAYA). Catalysis depends on charge relay system residues His85, Asp226, and Ser652.

The protein belongs to the peptidase S46 family.

The protein resides in the secreted. It is found in the cell surface. Its activity is regulated as follows. Enzyme activity is completely blocked by diisopropyl-fluorophosphates, moderately by phenylmethylsulfonyl fluoride (PMSF) and 4-(2-methyl)benzenesulfonyl fluoride, and slightly by pepstatin in vitro. Its function is as follows. Catalyzes the removal of dipeptides from the N-terminus of oligopeptides. Shows a strict specificity for acidic residues (Asp or Glu) in the P1 position, and has a hydrophobic residue preference at the P2 position. Is likely involved in amino acid metabolism and bacterial growth/survival of asaccharolytic P.endodontalis, that utilizes amino acids from extracellular proteinaceous nutrients as energy and carbon sources. The sequence is that of Asp/Glu-specific dipeptidyl-peptidase (dpp11) from Porphyromonas endodontalis (strain ATCC 35406 / DSM 24491 / JCM 8526 / CCUG 16442 / BCRC 14492 / NCTC 13058 / HG 370) (Bacteroides endodontalis).